A 405-amino-acid polypeptide reads, in one-letter code: Protochlorophyllide reductase A, chloroplastic (405 aa).

The transit peptide at 1-69 (MALQAASLVS…LRNNKAIIRA (69 aa)) directs the protein to the chloroplast.

Belongs to the short-chain dehydrogenases/reductases (SDR) family. POR subfamily. As to quaternary structure, forms large complexes including TOC33, pPORA and OEP161 during pPORA import into plastids at the plastid envelope membrane. Interacts with CPP1 during plastid import. In terms of tissue distribution, expressed in young seedlings. Not detected in leaves.

The protein resides in the plastid. Its subcellular location is the chloroplast. It catalyses the reaction chlorophyllide a + NADP(+) = protochlorophyllide a + NADPH + H(+). Its pathway is porphyrin-containing compound metabolism; chlorophyll biosynthesis. Its function is as follows. Phototransformation of protochlorophyllide (Pchlide) to chlorophyllide (Chlide). PORA may also function as a photoprotectant during the transitory stage from dark to light. Functions in skotomorphogenesis, photomorphogenesis and throughout the plant life under specific light conditions. The chain is Protochlorophyllide reductase A, chloroplastic (PORA) from Arabidopsis thaliana (Mouse-ear cress).